The sequence spans 257 residues: tRNA pseudouridine synthase A (257 aa).

D43 (nucleophile) is an active-site residue. Y94 serves as a coordination point for substrate.

It belongs to the tRNA pseudouridine synthase TruA family.

The catalysed reaction is uridine(38/39/40) in tRNA = pseudouridine(38/39/40) in tRNA. In terms of biological role, formation of pseudouridine at positions 38, 39 and 40 in the anticodon stem and loop of transfer RNAs. This Pyrobaculum arsenaticum (strain DSM 13514 / JCM 11321 / PZ6) protein is tRNA pseudouridine synthase A.